The primary structure comprises 277 residues: Co-chaperone protein DjlA (277 aa).

Residues methionine 1 to lysine 6 lie on the Periplasmic side of the membrane. The chain crosses the membrane as a helical span at residues leucine 7–histidine 31. Over methionine 32 to lysine 277 the chain is Cytoplasmic. Residues aspartate 211–lysine 277 enclose the J domain.

As to quaternary structure, homodimer.

The protein localises to the cell inner membrane. Regulatory DnaK co-chaperone. Direct interaction between DnaK and DjlA is needed for the induction of the wcaABCDE operon, involved in the synthesis of a colanic acid polysaccharide capsule, possibly through activation of the RcsB/RcsC phosphotransfer signaling pathway. The colanic acid capsule may help the bacterium survive conditions outside the host. The protein is Co-chaperone protein DjlA of Yersinia pestis.